The following is a 320-amino-acid chain: MIKKIGVLTSGGDAPGMNAAIRSVIRAALAKGIEVYGIHDGYLGLHRDRIEKLERRSVSDIINRGGTMLGSARFPAFKEESVRREAIANLNKHGIEALVVIGGDGSYMGAKKLTEMGYPCIGLPGTIDNDIAGTDFTIGFDTALNVVMEAIDRLRDTSTSHKRISVVEVMGRHCGDLAMAAAVAGGAEFVIVPEKGFKKEDLLANIDEGIASGKRHAIITICEHVTDVNALANLIELHTGLETRATILGHIQRGGSPTARDRILASRMGAYAVDLLIEGQGGRCIGLQRNELVHHDIIDCIENMKRPFNEELYNLTKILF.

Gly-12 is a binding site for ATP. Residue 22–26 (RSVIR) participates in ADP binding. ATP-binding positions include 73-74 (RF) and 103-106 (GDGS). Asp-104 serves as a coordination point for Mg(2+). Substrate is bound at residue 126–128 (TID). Asp-128 (proton acceptor) is an active-site residue. Arg-155 provides a ligand contact to ADP. Substrate is bound by residues Arg-163 and 170–172 (MGR). ADP contacts are provided by residues 186-188 (GAE) and 214-216 (KRH). Residues Glu-223, Arg-244, and 250–253 (HIQR) each bind substrate.

Belongs to the phosphofructokinase type A (PFKA) family. ATP-dependent PFK group I subfamily. Prokaryotic clade 'B1' sub-subfamily. As to quaternary structure, homotetramer. The cofactor is Mg(2+).

The protein localises to the cytoplasm. It catalyses the reaction beta-D-fructose 6-phosphate + ATP = beta-D-fructose 1,6-bisphosphate + ADP + H(+). It participates in carbohydrate degradation; glycolysis; D-glyceraldehyde 3-phosphate and glycerone phosphate from D-glucose: step 3/4. With respect to regulation, allosterically activated by ADP and other diphosphonucleosides, and allosterically inhibited by phosphoenolpyruvate. Functionally, catalyzes the phosphorylation of D-fructose 6-phosphate to fructose 1,6-bisphosphate by ATP, the first committing step of glycolysis. The polypeptide is ATP-dependent 6-phosphofructokinase (Tolumonas auensis (strain DSM 9187 / NBRC 110442 / TA 4)).